Reading from the N-terminus, the 1234-residue chain is MSDTTDSTSRFRLGDDIHFSYDNQSQPTTSESPAPSSSNKKKKKKANKKHKQPVEATLNNPEDDYPTSRVIKQAPNGDVIVESLDDEASHQNQENHRHHHQYTNIWDSASIEEQENLKSFWESLDESSKMELVKIDKKSIMEIFKNETKANNQSHHGHGANGTSSASGANSAANANPVTPSCACKYCGRRSTIIEDELENIYDNHFDDIIDFIHEIRDINDLNALPGLLFGGFHMLEEEHKLQKRQQRMKHKRDHPASQNHTENPEVHGEHPHVQPQNFVNSRAPADSINTSVVDNRTPYPVAAGSIGAKQLQHQQQLQQQLQQQQLRQLQQQLQQEQNVHSQPQQSLQMQQQLNENDLPGGNTSDLAKHLEKMSLEDKKGEYTNERKIFQKLLDPKLVEVLDKVDFEKVKSGNYVGSASQANLFQRADCLREIVRDLHKADKTQLEQGLSFLKNISSIFSNSKTPFPADVTSNPRNFSSKFNDQLSNFAEDLLKNDGNSFIEMMESLSESRTAREDLLKDPTKKDAQAWVDEDDNNDSKRPDASTVKQPSQEYEYYEESEEDEEELSEEDEDDADDNGLNEDDDLVQDGHHDDSASDTESEISEEEKMQEIRRLFLIQVIKLFQERLKSAYKEKLSEDRTQKLIEELEAEENAKKERELKKLKQKEKAKEKKRLQQLAKEEEKKKKEEEQRAKEEELKQKQEALKADQRRRKEEAKLKREEEKKKRIEELKRKEEEHKKKVEAQQKKEEEAKKLKEERKKKAEEERKKKEEEKRQKELLKKQKEEERERLKLEAEENERLEKEQQELQELQESQNQLELESAQLPAELAEEINASPDSFSPTKNHLLEQLYQARPSSVSGPTTISPPIQFTPEAVPPVAAVSSVVPSVVPISPALSGAILNGTGSPNSRNAMLYGSSAQAQLPNGLNSSTSNMSPWSSKSRLNSTSGASLQSNLFQPQLSASGFSPFNDFSTPATSAGIGSVNVNAPLASTAVEPLAGANNGGVWNPSTTSSRNNSIWSNTPNLNNASIWGNTLPSLAGGAGAGASTPSAAHTLPNSAPLASDNELIQVAAYNTFQMLQNSNQLEFGAAPLMKLFSGVKLLLGNNALTINQLLSSCDSTSVYHFEFVYDDFGTVTHVKVNFNNGGLAQSLQSQAAPTLLNNTLATSAAGLRSSPPPGLGTKASTGSVPLSQFRFNINDANSPLLSNLGDWSSGNNSTNANGNSSNGGSRGLWN.

Polar residues-rich tracts occupy residues 1–10 and 21–31; these read MSDTTDSTSR and YDNQSQPTTSE. 7 disordered regions span residues 1–70, 149–175, 246–283, 513–608, 661–816, 924–945, and 1214–1234; these read MSDT…TSRV, KANN…AANA, QQRM…VNSR, TARE…EEEK, KKLK…ESQN, PNGL…RLNS, and GNNS…GLWN. The span at 39-51 shows a compositional bias: basic residues; that stretch reads NKKKKKKANKKHK. The span at 161-175 shows a compositional bias: low complexity; the sequence is NGTSSASGANSAANA. Basic and acidic residues-rich tracts occupy residues 263 to 273 and 513 to 527; these read ENPEVHGEHPH and TARE…KKDA. Composition is skewed to acidic residues over residues 555–587 and 596–605; these read EYYE…DDLV and ASDTESEISE. The stretch at 633–826 forms a coiled coil; sequence KEKLSEDRTQ…QLELESAQLP (194 aa). 2 stretches are compositionally biased toward basic and acidic residues: residues 661 to 670 and 679 to 806; these read KKLKQKEKAK and AKEE…KEQQ. Composition is skewed to low complexity over residues 929–941 and 1214–1227; these read SSTS…SSKS and GNNS…SSNG.

The protein belongs to the NST1 family.

The protein localises to the cytoplasm. Functionally, may act as a negative regulator of salt tolerance. This Scheffersomyces stipitis (strain ATCC 58785 / CBS 6054 / NBRC 10063 / NRRL Y-11545) (Yeast) protein is Stress response protein NST1 (NST1).